The sequence spans 833 residues: Leucine--tRNA ligase (833 aa).

The 'HIGH' region signature appears at 41–52 (PYPSGAGLHVGH). Positions 610 to 614 (KMSKS) match the 'KMSKS' region motif. Lys613 is a binding site for ATP.

This sequence belongs to the class-I aminoacyl-tRNA synthetase family.

It localises to the cytoplasm. The catalysed reaction is tRNA(Leu) + L-leucine + ATP = L-leucyl-tRNA(Leu) + AMP + diphosphate. In Streptococcus agalactiae serotype Ia (strain ATCC 27591 / A909 / CDC SS700), this protein is Leucine--tRNA ligase.